Consider the following 210-residue polypeptide: Isochorismatase domain-containing protein 2 (210 aa).

The residue at position 7 (Ser7) is a Phosphoserine.

The protein belongs to the isochorismatase family. As to quaternary structure, interacts with CDKN2A.

The protein resides in the cytoplasm. Its subcellular location is the nucleus. In Rattus norvegicus (Rat), this protein is Isochorismatase domain-containing protein 2 (Isoc2).